The chain runs to 323 residues: Down-regulator of invasive growth 2 (323 aa).

The segment covering 1 to 10 (MNKEEQEDPQ) has biased composition (acidic residues). The disordered stretch occupies residues 1 to 26 (MNKEEQEDPQQEQISTVQENDPRNLQ). Positions 11-26 (QEQISTVQENDPRNLQ) are enriched in polar residues. Ser34 is modified (phosphoserine). A disordered region spans residues 67–87 (LSQKEEDHSGKPPTITTSPAE). Ser225, Ser266, and Ser270 each carry phosphoserine.

As to quaternary structure, forms a complex with DIG1, STE12 and either FUS3 or KSS1. The interaction of FUS3 with STE12 depends on the presence of both DIG1 and DIG2. STE12 is lost from FUS3/DIG1/DIG2 complex after pheromone treatment. DIG1 and DIG2 have also been reported to interact with CLN1 and CLN2. Phosphorylated by FUS3 and KSS1, in a pheromone-stimulated manner.

The protein resides in the nucleus. Its function is as follows. DIG2 and DIG1 are negative regulators of the filamentation and pheromone induced mating program. DIG1 and DIG2 inhibit the transcriptional activity of STE12 by direct protein-protein interaction. DIG2 binds to the DNA binding domain (DBD) of STE12 and thus inhibits transcription when overexpressed. This is Down-regulator of invasive growth 2 (DIG2) from Saccharomyces cerevisiae (strain ATCC 204508 / S288c) (Baker's yeast).